The primary structure comprises 232 residues: MIPTSFPPREEIARLTARMLLEIEAVHFRPQEPFTLASGLPSPTYIDCRKLISYPRIRSTLMDFMAVTLLRDAGFEAFDNIAGGETAGIPFAALVAERLGLPMTYVRKKPKGYGRNARIEGVMTEGQRVLLVEDLTTDGGSKLSFVDAIRETGASCAHTAVIFYYGIFPETIGRLQAHGVTLHHLCTWWDVLAEARASGTFDAGTLAEVESFLSNPRDWQDARKPADPTKSL.

Residues arginine 107, lysine 108, lysine 111, and 133-141 (EDLTTDGGS) each bind 5-phospho-alpha-D-ribose 1-diphosphate. Orotate is bound at residue threonine 137.

It belongs to the purine/pyrimidine phosphoribosyltransferase family. PyrE subfamily. In terms of assembly, homodimer. Mg(2+) is required as a cofactor.

It carries out the reaction orotidine 5'-phosphate + diphosphate = orotate + 5-phospho-alpha-D-ribose 1-diphosphate. Its pathway is pyrimidine metabolism; UMP biosynthesis via de novo pathway; UMP from orotate: step 1/2. Catalyzes the transfer of a ribosyl phosphate group from 5-phosphoribose 1-diphosphate to orotate, leading to the formation of orotidine monophosphate (OMP). The protein is Orotate phosphoribosyltransferase of Cereibacter sphaeroides (strain ATCC 17023 / DSM 158 / JCM 6121 / CCUG 31486 / LMG 2827 / NBRC 12203 / NCIMB 8253 / ATH 2.4.1.) (Rhodobacter sphaeroides).